We begin with the raw amino-acid sequence, 78 residues long: UPF0335 protein RP113 (78 aa).

The protein belongs to the UPF0335 family.

In Rickettsia prowazekii (strain Madrid E), this protein is UPF0335 protein RP113.